The sequence spans 320 residues: Fructose-1,6-bisphosphatase class 1 (320 aa).

Positions 93, 114, 116, and 117 each coordinate Mg(2+). Residues 117–120 (DGSS), Tyr-225, and Lys-256 contribute to the substrate site. Glu-262 contacts Mg(2+).

The protein belongs to the FBPase class 1 family. Homotetramer. It depends on Mg(2+) as a cofactor.

It localises to the cytoplasm. The catalysed reaction is beta-D-fructose 1,6-bisphosphate + H2O = beta-D-fructose 6-phosphate + phosphate. It functions in the pathway carbohydrate biosynthesis; gluconeogenesis. This chain is Fructose-1,6-bisphosphatase class 1, found in Syntrophotalea carbinolica (strain DSM 2380 / NBRC 103641 / GraBd1) (Pelobacter carbinolicus).